The primary structure comprises 342 residues: Glycerol-3-phosphate dehydrogenase [NAD(P)+] (342 aa).

Positions 11, 33, and 112 each coordinate NADPH. The sn-glycerol 3-phosphate site is built by Lys-112, Gly-147, and Ser-149. Ala-151 lines the NADPH pocket. Residues Lys-202, Asp-255, Ser-265, Arg-266, and Asn-267 each coordinate sn-glycerol 3-phosphate. Lys-202 (proton acceptor) is an active-site residue. Position 266 (Arg-266) interacts with NADPH. NADPH is bound by residues Val-290 and Glu-292.

This sequence belongs to the NAD-dependent glycerol-3-phosphate dehydrogenase family.

It is found in the cytoplasm. It catalyses the reaction sn-glycerol 3-phosphate + NAD(+) = dihydroxyacetone phosphate + NADH + H(+). It carries out the reaction sn-glycerol 3-phosphate + NADP(+) = dihydroxyacetone phosphate + NADPH + H(+). Its pathway is membrane lipid metabolism; glycerophospholipid metabolism. Catalyzes the reduction of the glycolytic intermediate dihydroxyacetone phosphate (DHAP) to sn-glycerol 3-phosphate (G3P), the key precursor for phospholipid synthesis. This chain is Glycerol-3-phosphate dehydrogenase [NAD(P)+], found in Cupriavidus metallidurans (strain ATCC 43123 / DSM 2839 / NBRC 102507 / CH34) (Ralstonia metallidurans).